A 357-amino-acid polypeptide reads, in one-letter code: Trans-enoyl reductase resD (357 aa).

Tyrosine 211 contributes to the NADP(+) binding site.

It belongs to the zinc-containing alcohol dehydrogenase family.

It functions in the pathway antifungal biosynthesis. In terms of biological role, trans-enoyl reductase; part of the gene cluster that mediates the biosynthesis of the tetrahydropyranyl antifungal agent restricticin that acts as an inhibitor of CYP51 and blocks the ergosterol biosynthesis. The highly reducing polyketide synthase resH, the short chain dehydrogenase resG, the cyclase resF, the FAD-dependent monooxygenase resA and the enoylreductase resD are required to generate the first stable intermediate desmethylrestrictinol. ResH with resD biosynthesize the first polyketide chain intermediate that is reduced by resG, followed by epoxidation by resA before 6-endo cyclization via epoxide opening by resF leads to desmethylrestrictinol. The methyltransferase resE then catalyzes the C4 O-methylation of desmethylrestrictinol to produce restrictinol, and the nonribosomal peptide synthetase resC catalyzes the C3 esterification of restrictinol with glycine that leads to restricticin. This chain is Trans-enoyl reductase resD, found in Aspergillus sclerotiorum.